The primary structure comprises 136 residues: Ribosome-binding factor A (136 aa).

This sequence belongs to the RbfA family. Monomer. Binds 30S ribosomal subunits, but not 50S ribosomal subunits or 70S ribosomes.

Its subcellular location is the cytoplasm. In terms of biological role, one of several proteins that assist in the late maturation steps of the functional core of the 30S ribosomal subunit. Associates with free 30S ribosomal subunits (but not with 30S subunits that are part of 70S ribosomes or polysomes). Required for efficient processing of 16S rRNA. May interact with the 5'-terminal helix region of 16S rRNA. In Rhizobium etli (strain ATCC 51251 / DSM 11541 / JCM 21823 / NBRC 15573 / CFN 42), this protein is Ribosome-binding factor A.